Reading from the N-terminus, the 430-residue chain is Synaptotagmin-11 (430 aa).

Residues 1–15 are Vesicular-facing; that stretch reads MAEITNIRPSFDVSP. Residues 16-36 traverse the membrane as a helical segment; the sequence is VAAGLIGASVLVVCVSVTVFV. At 37–430 the chain is on the cytoplasmic side; the sequence is WTCCHQQAEK…IAKWHSLSEY (394 aa). Residues 79–90 show a composition bias toward basic and acidic residues; that stretch reads RRDKDGPRRESG. 2 disordered regions span residues 79 to 120 and 132 to 152; these read RRDK…CMDQ and RSPMTSLTPGESKATSPSSPE. Serine 133 is modified (phosphoserine). Positions 134 to 150 are enriched in polar residues; that stretch reads PMTSLTPGESKATSPSS. 2 consecutive C2 domains span residues 156 to 278 and 290 to 425; these read MLGS…QLTR and SRGE…AKWH. Aspartate 249, serine 252, and aspartate 255 together coordinate Ca(2+).

Belongs to the synaptotagmin family. Homodimer. Can also form heterodimers. Interacts with PRKN. Interacts (via C2 2 domain) with AGO2 and SND1; the interaction with SND1 is direct. Interacts with KIF1A; the interaction increases in presence of calcium. Ca(2+) is required as a cofactor. In terms of processing, ubiquitinated, at least by PRKN, and targeted to the proteasome complex for degradation. Ubiquitination is inhibited by ATP13A2. In terms of tissue distribution, expressed in cerebellun, cerebellar cortex, hippocampus, olfactory bulb and spinal cord (at protein level). Expressed by neurons, astrocytes and microglia (at protein level). Expressed in macrophages (at protein level).

The protein resides in the cytoplasmic vesicle membrane. It localises to the perikaryon. The protein localises to the golgi apparatus. Its subcellular location is the trans-Golgi network membrane. It is found in the recycling endosome membrane. The protein resides in the lysosome membrane. It localises to the cytoplasmic vesicle. The protein localises to the phagosome. Its subcellular location is the cell projection. It is found in the axon. The protein resides in the dendrite. It localises to the postsynaptic density. The protein localises to the clathrin-coated vesicle membrane. Synaptotagmin family member involved in vesicular and membrane trafficking which does not bind Ca(2+). Inhibits clathrin-mediated and bulk endocytosis, functions to ensure precision in vesicle retrieval. Plays an important role in dopamine transmission by regulating endocytosis and the vesicle-recycling process. Essential component of a neuronal vesicular trafficking pathway that differs from the synaptic vesicle trafficking pathway but is crucial for development and synaptic plasticity. In macrophages and microglia, inhibits the conventional cytokine secretion, of at least IL6 and TNF, and phagocytosis. In astrocytes, regulates lysosome exocytosis, mechanism required for the repair of injured astrocyte cell membrane. Required for the ATP13A2-mediated regulation of the autophagy-lysosome pathway. In Mus musculus (Mouse), this protein is Synaptotagmin-11.